The sequence spans 380 residues: Tetraacyldisaccharide 4'-kinase (380 aa).

ATP is bound at residue 51 to 58; sequence SVGGTGKT.

It belongs to the LpxK family.

The enzyme catalyses a lipid A disaccharide + ATP = a lipid IVA + ADP + H(+). It participates in glycolipid biosynthesis; lipid IV(A) biosynthesis; lipid IV(A) from (3R)-3-hydroxytetradecanoyl-[acyl-carrier-protein] and UDP-N-acetyl-alpha-D-glucosamine: step 6/6. Transfers the gamma-phosphate of ATP to the 4'-position of a tetraacyldisaccharide 1-phosphate intermediate (termed DS-1-P) to form tetraacyldisaccharide 1,4'-bis-phosphate (lipid IVA). This Bacteroides thetaiotaomicron (strain ATCC 29148 / DSM 2079 / JCM 5827 / CCUG 10774 / NCTC 10582 / VPI-5482 / E50) protein is Tetraacyldisaccharide 4'-kinase.